The chain runs to 368 residues: Chaperone protein DnaJ (368 aa).

The J domain occupies 5 to 75 (DFYKILGVEK…TKRKQYDKFG (71 aa)). The CR-type zinc finger occupies 139–222 (GKEISQKLTK…CRGKTIVETK (84 aa)). Zn(2+) is bound by residues cysteine 152, cysteine 155, cysteine 169, cysteine 172, cysteine 196, cysteine 199, cysteine 210, and cysteine 213. 4 CXXCXGXG motif repeats span residues 152–159 (CDNCKGSG), 169–176 (CYNCQGRG), 196–203 (CSVCLGSG), and 210–217 (CKKCRGKT).

The protein belongs to the DnaJ family. Homodimer. It depends on Zn(2+) as a cofactor.

The protein resides in the cytoplasm. Its function is as follows. Participates actively in the response to hyperosmotic and heat shock by preventing the aggregation of stress-denatured proteins and by disaggregating proteins, also in an autonomous, DnaK-independent fashion. Unfolded proteins bind initially to DnaJ; upon interaction with the DnaJ-bound protein, DnaK hydrolyzes its bound ATP, resulting in the formation of a stable complex. GrpE releases ADP from DnaK; ATP binding to DnaK triggers the release of the substrate protein, thus completing the reaction cycle. Several rounds of ATP-dependent interactions between DnaJ, DnaK and GrpE are required for fully efficient folding. Also involved, together with DnaK and GrpE, in the DNA replication of plasmids through activation of initiation proteins. This chain is Chaperone protein DnaJ, found in Mesomycoplasma hyopneumoniae (strain 232) (Mycoplasma hyopneumoniae).